A 43-amino-acid chain; its full sequence is Hainantoxin F5-22.36 (43 aa).

Cystine bridges form between Cys1–Cys19, Cys8–Cys24, and Cys18–Cys38.

This sequence belongs to the neurotoxin 14 (magi-1) family. 02 (HWTX-XVIc) subfamily. In terms of tissue distribution, expressed by the venom gland.

It is found in the secreted. Probable ion channel inhibitor. The sequence is that of Hainantoxin F5-22.36 from Cyriopagopus hainanus (Chinese bird spider).